We begin with the raw amino-acid sequence, 226 residues long: Ribonuclease 3 (226 aa).

One can recognise an RNase III domain in the interval 6 to 128 (INKLQRKLGY…LIGGVFLDSD (123 aa)). Residue Glu41 coordinates Mg(2+). Asp45 is a catalytic residue. The Mg(2+) site is built by Asp114 and Glu117. The active site involves Glu117. A DRBM domain is found at 155-225 (DPKTRLQEYL…AEQALIKLGL (71 aa)).

This sequence belongs to the ribonuclease III family. As to quaternary structure, homodimer. It depends on Mg(2+) as a cofactor.

It is found in the cytoplasm. It carries out the reaction Endonucleolytic cleavage to 5'-phosphomonoester.. Digests double-stranded RNA. Involved in the processing of primary rRNA transcript to yield the immediate precursors to the large and small rRNAs (23S and 16S). Processes some mRNAs, and tRNAs when they are encoded in the rRNA operon. Processes pre-crRNA and tracrRNA of type II CRISPR loci if present in the organism. The polypeptide is Ribonuclease 3 (rnc) (Pantoea ananatis (strain LMG 20103)).